The sequence spans 261 residues: Phosphonates import ATP-binding protein PhnC (261 aa).

Residues 15 to 257 (LCLENTSAVY…LERSAIPPKR (243 aa)) enclose the ABC transporter domain. Position 48–55 (48–55 (GPSGSGKS)) interacts with ATP.

It belongs to the ABC transporter superfamily. Phosphonates importer (TC 3.A.1.9.1) family. In terms of assembly, the complex is composed of two ATP-binding proteins (PhnC), two transmembrane proteins (PhnE) and a solute-binding protein (PhnD).

The protein resides in the cell inner membrane. It carries out the reaction phosphonate(out) + ATP + H2O = phosphonate(in) + ADP + phosphate + H(+). Part of the ABC transporter complex PhnCDE involved in phosphonates import. Responsible for energy coupling to the transport system. This Hyphomonas neptunium (strain ATCC 15444) protein is Phosphonates import ATP-binding protein PhnC.